The primary structure comprises 47 residues: Delta-actitoxin-Aspp1b (47 aa).

3 disulfides stabilise this stretch: cysteine 4-cysteine 44, cysteine 6-cysteine 34, and cysteine 27-cysteine 45.

Belongs to the sea anemone sodium channel inhibitory toxin family. Type I subfamily.

Its subcellular location is the secreted. It is found in the nematocyst. Its function is as follows. Binds specifically to voltage-gated sodium channels (Nav), thereby delaying their inactivation during signal transduction. Has a longer mammalian heart stimulation effect than Hk2a, Hk8a and Hk16a. This Anthopleura sp. (strain 'Zhanjiang') (Sea anemone) protein is Delta-actitoxin-Aspp1b.